The primary structure comprises 603 residues: DNA mismatch repair protein MutL (603 aa).

The protein belongs to the DNA mismatch repair MutL/HexB family.

In terms of biological role, this protein is involved in the repair of mismatches in DNA. It is required for dam-dependent methyl-directed DNA mismatch repair. May act as a 'molecular matchmaker', a protein that promotes the formation of a stable complex between two or more DNA-binding proteins in an ATP-dependent manner without itself being part of a final effector complex. The sequence is that of DNA mismatch repair protein MutL from Listeria monocytogenes serotype 4a (strain HCC23).